The following is an 84-amino-acid chain: Mu-conotoxin-like Cal 12.2a (84 aa).

A signal peptide spans methionine 1 to leucine 19. The propeptide occupies isoleucine 20–arginine 42. Disulfide bonds link cysteine 45/cysteine 57, cysteine 52/cysteine 65, cysteine 59/cysteine 70, and cysteine 64/cysteine 76. Residue proline 48 is modified to 4-hydroxyproline. Tryptophan 72 is subject to 6'-bromotryptophan. Residue proline 77 is modified to 4-hydroxyproline. Tryptophan 81 carries the post-translational modification 6'-bromotryptophan.

The protein belongs to the conotoxin O1 superfamily. As to expression, expressed by the venom duct.

It is found in the secreted. Its function is as follows. Mu-conotoxins block voltage-gated sodium channels. This toxin reversibly blocks voltage-gated sodium channel in cephalopods, with no alteration in the voltage dependence of sodium conductance or on the kinetics of inactivation. The polypeptide is Mu-conotoxin-like Cal 12.2a (Californiconus californicus (California cone)).